A 157-amino-acid chain; its full sequence is Transcription elongation factor GreA (157 aa).

It belongs to the GreA/GreB family.

Necessary for efficient RNA polymerase transcription elongation past template-encoded arresting sites. The arresting sites in DNA have the property of trapping a certain fraction of elongating RNA polymerases that pass through, resulting in locked ternary complexes. Cleavage of the nascent transcript by cleavage factors such as GreA or GreB allows the resumption of elongation from the new 3'terminus. GreA releases sequences of 2 to 3 nucleotides. The protein is Transcription elongation factor GreA of Azorhizobium caulinodans (strain ATCC 43989 / DSM 5975 / JCM 20966 / LMG 6465 / NBRC 14845 / NCIMB 13405 / ORS 571).